The following is a 639-amino-acid chain: MPQPSVSGMDPPFGDAFRSHTFSEQTLMSTDLLANSSDPDFMYELDREMNYQQNPRDNFLSLEDCKDIENLESFTDVLDNEGALTSNWEQWDTYCEDLTKYTKLTSCDIWGTKEVDYLGLDDFSSPYQDEEVISKTPTLAQLNSEDSQSVSDSLYYPDSLFSVKQNPLPSSFPGKKITSRAAAPVCSSKTLQAEVPLSDCVQKASKPTSSTQIMVKTNMYHNEKVNFHVECKDYVKKAKVKINPVQQSRPLLSQIHTDAAKENTCYCGAVAKRQEKKGMEPLQGHATPALPFKETQELLLSPLPQEGPGSLAAGESSSLSASTSVSDSSQKKEEHNYSLFVSDNLGEQPTKCSPEEDEEDEEDVDDEDHDEGFGSEHELSENEEEEEEEEDYEDDKDDDISDTFSEPGYENDSVEDLKEVTSISSRKRGKRRYFWEYSEQLTPSQQERMLRPSEWNRDTLPSNMYQKNGLHHGKYAVKKSRRTDVEDLTPNPKKLLQIGNELRKLNKVISDLTPVSELPLTARPRSRKEKNKLASRACRLKKKAQYEANKVKLWGLNTEYDNLLFVINSIKQEIVNRVQNPRDERGPNMGQKLEILIKDTLGLPVAGQTSEFVNQVLEKTAEGNPTGGLVGLRIPTSKV.

The segment at 302–422 is disordered; sequence PLPQEGPGSL…SVEDLKEVTS (121 aa). Positions 310–328 are enriched in low complexity; sequence SLAAGESSSLSASTSVSDS. Residues 339–351 are compositionally biased toward polar residues; it reads LFVSDNLGEQPTK. Acidic residues predominate over residues 355–370; it reads EEDEEDEEDVDDEDHD. Residues 371-380 are compositionally biased toward basic and acidic residues; that stretch reads EGFGSEHELS. Acidic residues predominate over residues 381–401; it reads ENEEEEEEEEDYEDDKDDDIS. Residues 521-584 enclose the bZIP domain; the sequence is TARPRSRKEK…VNRVQNPRDE (64 aa). The interval 523 to 532 is basic motif; sequence RPRSRKEKNK. The tract at residues 533 to 540 is leucine-zipper; that stretch reads LASRACRL.

Belongs to the bZIP family. CREBRF subfamily. Interacts (via leucine-zipper domain) with CREB3 (via leucine-zipper domain); the interaction promotes CREB3 degradation. In terms of processing, probably degraded by the proteasome.

It is found in the nucleus. Its function is as follows. Acts as a negative regulator of the endoplasmic reticulum stress response or unfolded protein response (UPR). Represses the transcriptional activity of CREB3 during the UPR. Recruits CREB3 into nuclear foci. This chain is CREB3 regulatory factor (CREBRF), found in Homo sapiens (Human).